We begin with the raw amino-acid sequence, 411 residues long: ATP-dependent Clp protease ATP-binding subunit ClpX (411 aa).

One can recognise a ClpX-type ZB domain in the interval 1–49 (MSDKNIRCSFCGRTQKEVKKLIAGPGVYICDECVKLAYDIIEEEDSEEI). Zn(2+)-binding residues include Cys-8, Cys-11, Cys-30, and Cys-33. 115–122 (PTGVGKTL) is an ATP binding site.

This sequence belongs to the ClpX chaperone family. In terms of assembly, component of the ClpX-ClpP complex. Forms a hexameric ring that, in the presence of ATP, binds to fourteen ClpP subunits assembled into a disk-like structure with a central cavity, resembling the structure of eukaryotic proteasomes.

Functionally, ATP-dependent specificity component of the Clp protease. It directs the protease to specific substrates. Can perform chaperone functions in the absence of ClpP. This Dictyoglomus turgidum (strain DSM 6724 / Z-1310) protein is ATP-dependent Clp protease ATP-binding subunit ClpX.